We begin with the raw amino-acid sequence, 160 residues long: Endoribonuclease YbeY (160 aa).

Residues histidine 123, histidine 127, and histidine 133 each contribute to the Zn(2+) site.

This sequence belongs to the endoribonuclease YbeY family. It depends on Zn(2+) as a cofactor.

The protein resides in the cytoplasm. Its function is as follows. Single strand-specific metallo-endoribonuclease involved in late-stage 70S ribosome quality control and in maturation of the 3' terminus of the 16S rRNA. The sequence is that of Endoribonuclease YbeY from Shouchella clausii (strain KSM-K16) (Alkalihalobacillus clausii).